We begin with the raw amino-acid sequence, 393 residues long: Formate-dependent phosphoribosylglycinamide formyltransferase (393 aa).

Residues 22–23 and glutamate 82 each bind N(1)-(5-phospho-beta-D-ribosyl)glycinamide; that span reads EL. ATP contacts are provided by residues arginine 114, lysine 155, 160–165, 195–198, and glutamate 203; these read SSGHGQ and EGFV. Residues 119–308 form the ATP-grasp domain; it reads RLAAEELGLP…EFALHARAIL (190 aa). The Mg(2+) site is built by glutamate 267 and glutamate 279. N(1)-(5-phospho-beta-D-ribosyl)glycinamide is bound by residues aspartate 286, lysine 356, and 363–364; that span reads RR.

Belongs to the PurK/PurT family. In terms of assembly, homodimer.

The catalysed reaction is N(1)-(5-phospho-beta-D-ribosyl)glycinamide + formate + ATP = N(2)-formyl-N(1)-(5-phospho-beta-D-ribosyl)glycinamide + ADP + phosphate + H(+). The protein operates within purine metabolism; IMP biosynthesis via de novo pathway; N(2)-formyl-N(1)-(5-phospho-D-ribosyl)glycinamide from N(1)-(5-phospho-D-ribosyl)glycinamide (formate route): step 1/1. Its function is as follows. Involved in the de novo purine biosynthesis. Catalyzes the transfer of formate to 5-phospho-ribosyl-glycinamide (GAR), producing 5-phospho-ribosyl-N-formylglycinamide (FGAR). Formate is provided by PurU via hydrolysis of 10-formyl-tetrahydrofolate. In Mannheimia succiniciproducens (strain KCTC 0769BP / MBEL55E), this protein is Formate-dependent phosphoribosylglycinamide formyltransferase.